Consider the following 227-residue polypeptide: NAD(P)H-hydrate epimerase (227 aa).

The 210-residue stretch at 12 to 221 (SRLVDELAIA…DIGVPRALLE (210 aa)) folds into the YjeF N-terminal domain. 59–63 (NNGGD) provides a ligand contact to (6S)-NADPHX. Positions 60 and 131 each coordinate K(+). Residues 135-141 (GTGATGE) and D164 each bind (6S)-NADPHX. K(+) is bound at residue T167.

It belongs to the NnrE/AIBP family. K(+) is required as a cofactor.

It catalyses the reaction (6R)-NADHX = (6S)-NADHX. The catalysed reaction is (6R)-NADPHX = (6S)-NADPHX. Its function is as follows. Catalyzes the epimerization of the S- and R-forms of NAD(P)HX, a damaged form of NAD(P)H that is a result of enzymatic or heat-dependent hydration. This is a prerequisite for the S-specific NAD(P)H-hydrate dehydratase to allow the repair of both epimers of NAD(P)HX. This is NAD(P)H-hydrate epimerase from Pirellula staleyi (strain ATCC 27377 / DSM 6068 / ICPB 4128) (Pirella staleyi).